The primary structure comprises 2120 residues: MRSFKRVNFGTLLSSQKEAEELLPALKEFLSNPPAGFPSSRSDAERRQACDAILRACNQQLTAKLACPRHLGSLLELAELACDGYLVSTPQRPPLYLERILFVLLRNAAAQGSPEATLRLAQPLHACLVQCSREAAPQDYEAVARGSFSLLWKGAEALLERRAAFAARLKALSFLVLLEDESTPCEVPHFASPTACRAVAAHQLFDASGHGLNEADADFLDDLLSRHVIRALVGERGSSSGLLSPQRALCLLELTLEHCRRFCWSRHHDKAISAVEKAHSYLRNTNLAPSLQLCQLGVKLLQVGEEGPQAVAKLLIKASAVLSKSMEAPSPPLRALYESCQFFLSGLERGTKRRYRLDAILSLFAFLGGYCSLLQQLRDDGVYGGSSKQQQSFLQMYFQGLHLYTVVVYDFAQGCQIVDLADLTQLVDSCKSTVVWMLEALEGLSGQELTDHMGMTASYTSNLAYSFYSHKLYAEACAISEPLCQHLGLVKPGTYPEVPPEKLHRCFRLQVESLKKLGKQAQGCKMVILWLAALQPCSPEHMAEPVTFWVRVKMDAARAGDKELQLKTLRDSLSGWDPETLALLLREELQAYKAVRADTGQERFNIICDLLELSPEETPAGAWARATHLVELAQVLCYHDFTQQTNCSALDAIREALQLLDSVRPEAQARDQLLDDKAQALLWLYICTLEAKMQEGIERDRRAQAPGNLEEFEVNDLNYEDKLQEDRFLYSNIAFNLAADAAQSKCLDQALALWKELLTKGQAPAVRCLQQTAASLQILAALYQLVAKPMQALEVLLLLRIVSERLKDHSKAAGSSCHITQLLLTLGCPSYAQLHLEEAASSLKHLDQTTDTYLLLSLTCDLLRSQLYWTHQKVTKGVSLLLSVLRDPALQKSSKAWYLLRVQVLQLVAAYLSLPSNNLSHSLWEQLCAQGWQTPEIALIDSHKLLRSIILLLMGSDILSTQKAAVETSFLDYGENLVQKWQVLSEVLSCSEKLVCHLGRLGSVSEAKAFCLEALKLTTKLQIPRQCALFLVLKGELELARNDIDLCQSDLQQVLFLLESCTEFGGVTQHLDSVKKVHLQKGKQQAQVPCPPQLPEEELFLRGPALELVATVAKEPGPIAPSTNSSPVLKTKPQPIPNFLSHSPTCDCSLCASPVLTAVCLRWVLVTAGVRLAMGHQAQGLDLLQVVLKGCPEAAERLTQALQASLNHKTPPSLVPSLLDEILAQAYTLLALEGLNQPSNESLQKVLQSGLKFVAARIPHLEPWRASLLLIWALTKLGGLSCCTTQLFASSWGWQPPLIKSVPGSEPSKTQGQKRSGRGRQKLASAPLRLNNTSQKGLEGRGLPCTPKPPDRIRQAGPHVPFTVFEEVCPTESKPEVPQAPRVQQRVQTRLKVNFSDDSDLEDPVSAEAWLAEEPKRRGTASRGRGRARKGLSLKTDAVVAPGSAPGNPGLNGRSRRAKKVASRHCEERRPQRASDQARPGPEIMRTIPEEELTDNWRKMSFEILRGSDGEDSASGGKTPAPGPEAASGEWELLRLDSSKKKLPSPCPDKESDKDLGPRLRLPSAPVATGLSTLDSICDSLSVAFRGISHCPPSGLYAHLCRFLALCLGHRDPYATAFLVTESVSITCRHQLLTHLHRQLSKAQKHRGSLEIADQLQGLSLQEMPGDVPLARIQRLFSFRALESGHFPQPEKESFQERLALIPSGVTVCVLALATLQPGTVGNTLLLTRLEKDSPPVSVQIPTGQNKLHLRSVLNEFDAIQKAQKENSSCTDKREWWTGRLALDHRMEVLIASLEKSVLGCWKGLLLPSSEEPGPAQEASRLQELLQDCGWKYPDRTLLKIMLSGAGALTPQDIQALAYGLCPTQPERAQELLNEAVGRLQGLTVPSNSHLVLVLDKDLQKLPWESMPSLQALPVTRLPSFRFLLSYSIIKEYGASPVLSQGVDPRSTFYVLNPHNNLSSTEEQFRANFSSEAGWRGVVGEVPRPEQVQEALTKHDLYIYAGHGAGARFLDGQAVLRLSCRAVALLFGCSSAALAVRGNLEGAGIVLKYIMAGCPLFLGNLWDVTDRDIDRYTEALLQGWLGAGPGAPLLYYVNQARQAPRLKYLIGAAPIAYGLPVSLR.

Serine 1126 is modified (phosphoserine). The disordered stretch occupies residues 1299–1355 (IKSVPGSEPSKTQGQKRSGRGRQKLASAPLRLNNTSQKGLEGRGLPCTPKPPDRIRQ). A phosphoserine mark is found at serine 1396 and serine 1399. Disordered regions lie at residues 1412 to 1485 (AEEP…PEIM) and 1507 to 1561 (GSDG…PRLR). Composition is skewed to basic residues over residues 1418–1432 (RGTA…RKGL) and 1454–1463 (RSRRAKKVAS). A compositionally biased stretch (basic and acidic residues) spans 1464-1473 (RHCEERRPQR). Serine 1508 carries the post-translational modification Phosphoserine. The segment covering 1548–1558 (PDKESDKDLGP) has biased composition (basic and acidic residues). The Peptidase C50 domain occupies 1945-2040 (PRSTFYVLNP…SAALAVRGNL (96 aa)). Residue cysteine 2029 is part of the active site.

As to quaternary structure, interacts with PTTG1. Interacts with RAD21. In terms of processing, autocleaves. This function, which is not essential for its protease activity, is unknown. Post-translationally, phosphorylated by CDK1. There are 8 Ser/Thr phosphorylation sites. Among them, Ser-1126 phosphorylation is the major site, which conducts to the enzyme inactivation.

It localises to the cytoplasm. Its subcellular location is the nucleus. It carries out the reaction All bonds known to be hydrolyzed by this endopeptidase have arginine in P1 and an acidic residue in P4. P6 is often occupied by an acidic residue or by a hydroxy-amino-acid residue, the phosphorylation of which enhances cleavage.. Its activity is regulated as follows. Regulated by at least two independent mechanisms. First, it is inactivated via its interaction with securin/PTTG1, which probably covers its active site. The association with PTTG1 is not only inhibitory, since PTTG1 is also required for activating it, the enzyme being inactive in cells in which PTTG1 is absent. PTTG1 degradation at anaphase, liberates it and triggers RAD21 cleavage. Second, phosphorylation at Ser-1126 inactivates it. The complete phosphorylation during mitosis, is removed when cells undergo anaphase. Activation of the enzyme at the metaphase-anaphase transition probably requires the removal of both securin and inhibitory phosphate. Its function is as follows. Caspase-like protease, which plays a central role in the chromosome segregation by cleaving the SCC1/RAD21 subunit of the cohesin complex at the onset of anaphase. During most of the cell cycle, it is inactivated by different mechanisms. This Homo sapiens (Human) protein is Separin (ESPL1).